A 292-amino-acid chain; its full sequence is Bifunctional protein FolD (292 aa).

NADP(+) is bound by residues 166–168 (GRS), serine 191, and isoleucine 232.

It belongs to the tetrahydrofolate dehydrogenase/cyclohydrolase family. As to quaternary structure, homodimer.

It carries out the reaction (6R)-5,10-methylene-5,6,7,8-tetrahydrofolate + NADP(+) = (6R)-5,10-methenyltetrahydrofolate + NADPH. The catalysed reaction is (6R)-5,10-methenyltetrahydrofolate + H2O = (6R)-10-formyltetrahydrofolate + H(+). The protein operates within one-carbon metabolism; tetrahydrofolate interconversion. Its function is as follows. Catalyzes the oxidation of 5,10-methylenetetrahydrofolate to 5,10-methenyltetrahydrofolate and then the hydrolysis of 5,10-methenyltetrahydrofolate to 10-formyltetrahydrofolate. This Wolbachia pipientis wMel protein is Bifunctional protein FolD.